A 127-amino-acid chain; its full sequence is Methylglyoxal synthase (127 aa).

An MGS-like domain is found at 1 to 127 (MEGQRCIALI…ENLIDFNSAD (127 aa)). Substrate-binding positions include His12, Lys16, 38 to 41 (TGTT), and 59 to 60 (SG). Asp65 serves as the catalytic Proton donor/acceptor. Residue His92 participates in substrate binding.

It belongs to the methylglyoxal synthase family.

It catalyses the reaction dihydroxyacetone phosphate = methylglyoxal + phosphate. Functionally, catalyzes the formation of methylglyoxal from dihydroxyacetone phosphate. The polypeptide is Methylglyoxal synthase (Agrobacterium fabrum (strain C58 / ATCC 33970) (Agrobacterium tumefaciens (strain C58))).